A 180-amino-acid chain; its full sequence is Adenine phosphoribosyltransferase (180 aa).

The protein belongs to the purine/pyrimidine phosphoribosyltransferase family. As to quaternary structure, homodimer.

Its subcellular location is the cytoplasm. It carries out the reaction AMP + diphosphate = 5-phospho-alpha-D-ribose 1-diphosphate + adenine. It functions in the pathway purine metabolism; AMP biosynthesis via salvage pathway; AMP from adenine: step 1/1. In terms of biological role, catalyzes a salvage reaction resulting in the formation of AMP, that is energically less costly than de novo synthesis. This chain is Adenine phosphoribosyltransferase, found in Mycobacterium avium (strain 104).